A 393-amino-acid polypeptide reads, in one-letter code: Arginine biosynthesis bifunctional protein ArgJ (393 aa).

Substrate contacts are provided by Thr-142, Lys-168, Thr-179, Glu-265, Asn-388, and Thr-393. Thr-179 serves as the catalytic Nucleophile.

It belongs to the ArgJ family. As to quaternary structure, heterotetramer of two alpha and two beta chains.

It localises to the cytoplasm. It catalyses the reaction N(2)-acetyl-L-ornithine + L-glutamate = N-acetyl-L-glutamate + L-ornithine. The catalysed reaction is L-glutamate + acetyl-CoA = N-acetyl-L-glutamate + CoA + H(+). It participates in amino-acid biosynthesis; L-arginine biosynthesis; L-ornithine and N-acetyl-L-glutamate from L-glutamate and N(2)-acetyl-L-ornithine (cyclic): step 1/1. Its pathway is amino-acid biosynthesis; L-arginine biosynthesis; N(2)-acetyl-L-ornithine from L-glutamate: step 1/4. In terms of biological role, catalyzes two activities which are involved in the cyclic version of arginine biosynthesis: the synthesis of N-acetylglutamate from glutamate and acetyl-CoA as the acetyl donor, and of ornithine by transacetylation between N(2)-acetylornithine and glutamate. The sequence is that of Arginine biosynthesis bifunctional protein ArgJ from Geobacter sulfurreducens (strain ATCC 51573 / DSM 12127 / PCA).